The chain runs to 1220 residues: Myosin-2 (1220 aa).

The span at 1-12 shows a compositional bias: polar residues; that stretch reads MMLSASPNTLAK. Disordered stretches follow at residues 1–54 and 68–95; these read MMLS…ARRS and QNGS…RKEK. Basic and acidic residues predominate over residues 20 to 33; sequence ESLRQKDECDRPKD. Residues 40–54 show a composition bias toward low complexity; that stretch reads SRPNSRARLPSARRS. The segment covering 82–95 has biased composition (basic and acidic residues); the sequence is ESERKEEGVKRKEK. The 50-residue stretch at 160-209 folds into the Myosin N-terminal SH3-like domain; the sequence is KKKLRVWCRVSNGQWQLGKIQSTSADTSLVMLSTANVVKVSTEELFPANP. A Myosin motor domain is found at 213 to 879; sequence EGVEDLIQLS…QIGIFEDRRK (667 aa). ATP-binding positions include 304–311 and 353–361; these read GESGAGKT and NANSSRFGK. Actin-binding stretches follow at residues 638-672 and 759-781; these read LIEK…KQHL and LFKL…KPNS. IQ domains follow at residues 881 to 910, 904 to 933, and 942 to 971; these read VLQG…VTLV, MRKV…FHAD, and ELSA…QKEL. 2 disordered regions span residues 968 to 1007 and 1075 to 1118; these read QKEL…MSDL and SITG…NGNT. Composition is skewed to polar residues over residues 997-1006 and 1098-1118; these read PQVQPTSMSD and TMST…NGNT. Positions 1003-1071 form a coiled coil; sequence SMSDLQKRIL…MSLAAARKSL (69 aa).

Belongs to the TRAFAC class myosin-kinesin ATPase superfamily. Myosin family. Plant myosin class VIII subfamily. Homodimer. As to expression, expressed in flowers, leaves and roots.

It is found in the cell junction. It localises to the plasmodesma. The protein localises to the endosome. Functionally, myosin heavy chain that is required for the cell cycle-regulated transport of various organelles and proteins for their segregation. Functions by binding with its tail domain to receptor proteins on organelles and exerting force with its N-terminal motor domain against actin filaments, thereby transporting its cargo along polarized actin cables. Involved in endocytosis via its action in endosomal trafficking. This chain is Myosin-2 (VIII-2), found in Arabidopsis thaliana (Mouse-ear cress).